The primary structure comprises 213 residues: High frequency lysogenization protein HflD homolog (213 aa).

The protein belongs to the HflD family.

Its subcellular location is the cytoplasm. The protein localises to the cell inner membrane. This is High frequency lysogenization protein HflD homolog from Klebsiella pneumoniae (strain 342).